Here is a 527-residue protein sequence, read N- to C-terminus: Glutamate--cysteine ligase (527 aa).

This sequence belongs to the glutamate--cysteine ligase type 1 family. Type 1 subfamily.

It carries out the reaction L-cysteine + L-glutamate + ATP = gamma-L-glutamyl-L-cysteine + ADP + phosphate + H(+). It functions in the pathway sulfur metabolism; glutathione biosynthesis; glutathione from L-cysteine and L-glutamate: step 1/2. This is Glutamate--cysteine ligase from Pseudomonas aeruginosa (strain LESB58).